A 359-amino-acid chain; its full sequence is UDP-2-acetamido-2-deoxy-3-oxo-D-glucuronate aminotransferase (359 aa).

Residues glycine 29, tyrosine 31, and serine 184 each coordinate UDP-2-acetamido-2-deoxy-alpha-D-ribo-hex-3-uluronate. Lysine 185 is subject to N6-(pyridoxal phosphate)lysine. Residues arginine 229, histidine 308, and tyrosine 309 each coordinate UDP-2-acetamido-2-deoxy-alpha-D-ribo-hex-3-uluronate.

It belongs to the DegT/DnrJ/EryC1 family. Homodimer. Pyridoxal 5'-phosphate is required as a cofactor.

The enzyme catalyses UDP-2-acetamido-2-deoxy-alpha-D-ribo-hex-3-uluronate + L-glutamate = UDP-2-acetamido-3-amino-2,3-dideoxy-alpha-D-glucuronate + 2-oxoglutarate. It participates in bacterial outer membrane biogenesis; LPS O-antigen biosynthesis. Functionally, plays a role in the biosynthesis of B-band O antigen for serotype O5. Catalyzes the amination of UDP-2-acetamido-2-deoxy-3-oxo-D-glucuronic acid (UDP-3-oxo-D-GlcNAcA) to UDP-2-acetamido-3-amino-2,3-dideoxy-D-glucuronic acid (UDP-GlcNAc3NA), using L-glutamate as the preferred amine donor. This is UDP-2-acetamido-2-deoxy-3-oxo-D-glucuronate aminotransferase from Pseudomonas aeruginosa (strain ATCC 15692 / DSM 22644 / CIP 104116 / JCM 14847 / LMG 12228 / 1C / PRS 101 / PAO1).